The primary structure comprises 132 residues: ATP synthase epsilon chain (132 aa).

The protein belongs to the ATPase epsilon chain family. F-type ATPases have 2 components, CF(1) - the catalytic core - and CF(0) - the membrane proton channel. CF(1) has five subunits: alpha(3), beta(3), gamma(1), delta(1), epsilon(1). CF(0) has four main subunits: a, b, b' and c.

It is found in the cellular chromatophore membrane. In terms of biological role, produces ATP from ADP in the presence of a proton gradient across the membrane. The sequence is that of ATP synthase epsilon chain (atpC) from Rhodobacter capsulatus (Rhodopseudomonas capsulata).